Here is a 281-residue protein sequence, read N- to C-terminus: ATP synthase gamma chain (281 aa).

Belongs to the ATPase gamma chain family. As to quaternary structure, F-type ATPases have 2 components, CF(1) - the catalytic core - and CF(0) - the membrane proton channel. CF(1) has five subunits: alpha(3), beta(3), gamma(1), delta(1), epsilon(1). CF(0) has three main subunits: a, b and c.

It is found in the cell inner membrane. Its function is as follows. Produces ATP from ADP in the presence of a proton gradient across the membrane. The gamma chain is believed to be important in regulating ATPase activity and the flow of protons through the CF(0) complex. The chain is ATP synthase gamma chain from Ehrlichia chaffeensis (strain ATCC CRL-10679 / Arkansas).